We begin with the raw amino-acid sequence, 799 residues long: Protein-lysine N-methyltransferase SMYD4 (799 aa).

112–114 (RSA) contacts S-adenosyl-L-methionine. The SET domain occupies 233 to 570 (LSVSLCTHPL…KGQEILHCYG (338 aa)). 8 residues coordinate Zn(2+): Cys-296, Cys-299, Cys-309, Cys-312, Cys-318, Cys-322, His-331, and Cys-335. An MYND-type zinc finger spans residues 296–335 (CHRCLKHTLATVPCGSCSYAKYCSQECMQQAWDLYHSTEC). S-adenosyl-L-methionine contacts are provided by residues 535 to 536 (NH), Tyr-569, and Phe-591.

The protein belongs to the class V-like SAM-binding methyltransferase superfamily. In terms of assembly, interacts (via MYND-type zinc finger) with HDAC1.

The protein localises to the nucleus. It is found in the cytoplasm. The enzyme catalyses L-lysyl-[protein] + S-adenosyl-L-methionine = N(6)-methyl-L-lysyl-[protein] + S-adenosyl-L-homocysteine + H(+). Protein-lysine N-methyltransferase. Monomethylates PRMT5, modulating its transcriptional activity. May also act as a histone methyltransferase. Plays a critical role in cardiac development. Acts as a key epigenetic regulator of gene expression during cardiac development via its dual activities as a methyltransferase and negative regulator of HDAC1. This Mus musculus (Mouse) protein is Protein-lysine N-methyltransferase SMYD4 (Smyd4).